A 28-amino-acid polypeptide reads, in one-letter code: Short cationic peptide-1a (28 aa).

Glutamic acid 1-amide is present on Glu28.

Expressed by the venom gland.

It is found in the secreted. In Cupiennius salei (American wandering spider), this protein is Short cationic peptide-1a.